Consider the following 83-residue polypeptide: Cardiotoxin 7'' (83 aa).

Positions 1–21 are cleaved as a signal peptide; sequence MKTLLLTLVVVTIVCLDLGYT. Disulfide bonds link Cys-24-Cys-43, Cys-36-Cys-61, Cys-65-Cys-76, and Cys-77-Cys-82.

It belongs to the three-finger toxin family. Short-chain subfamily. Orphan group XV sub-subfamily. In terms of tissue distribution, expressed by the venom gland.

The protein resides in the secreted. The protein localises to the target cell membrane. Its function is as follows. Has low cytotoxic activity. In Naja atra (Chinese cobra), this protein is Cardiotoxin 7''.